Consider the following 138-residue polypeptide: MPTISQLIRKGREVLTEKSTAPALKECPQKRGVCTRVYTTTPKKPNSALRKVARVRLTNGVEVTAYIPGIGHNLQEHSVVLVRGGRVKDLPGVRYHIVRGALDTAGTQNRNQGRSKYGTKRPKKGAATAAKGPVKGKK.

At Asp89 the chain carries 3-methylthioaspartic acid. The disordered stretch occupies residues 101-138 (ALDTAGTQNRNQGRSKYGTKRPKKGAATAAKGPVKGKK). The segment covering 105 to 114 (AGTQNRNQGR) has biased composition (polar residues). A compositionally biased stretch (low complexity) spans 125-138 (GAATAAKGPVKGKK).

This sequence belongs to the universal ribosomal protein uS12 family. Part of the 30S ribosomal subunit. Contacts proteins S8 and S17. May interact with IF1 in the 30S initiation complex.

Its function is as follows. With S4 and S5 plays an important role in translational accuracy. Functionally, interacts with and stabilizes bases of the 16S rRNA that are involved in tRNA selection in the A site and with the mRNA backbone. Located at the interface of the 30S and 50S subunits, it traverses the body of the 30S subunit contacting proteins on the other side and probably holding the rRNA structure together. The combined cluster of proteins S8, S12 and S17 appears to hold together the shoulder and platform of the 30S subunit. This chain is Small ribosomal subunit protein uS12, found in Heliobacterium modesticaldum (strain ATCC 51547 / Ice1).